Consider the following 457-residue polypeptide: Probable xyloglucan 6-xylosyltransferase 3 (457 aa).

The segment at 1-40 is disordered; that stretch reads MGKEDGFRTQKRVSTASSAAAGVLPTTMASGGVRRPPPRG. Residues 1–51 are Cytoplasmic-facing; it reads MGKEDGFRTQKRVSTASSAAAGVLPTTMASGGVRRPPPRGRQIQKTFNNVK. The chain crosses the membrane as a helical; Signal-anchor for type II membrane protein span at residues 52-71; the sequence is MTILCGFVTILVLRGTIGIN. The Lumenal portion of the chain corresponds to 72–457; the sequence is FGTSDADVVN…TTPLKIEARS (386 aa). Residues asparagine 115 and asparagine 431 are each glycosylated (N-linked (GlcNAc...) asparagine).

Belongs to the glycosyltransferase 34 family.

It is found in the golgi apparatus membrane. It carries out the reaction Transfers an alpha-D-xylosyl residue from UDP-D-xylose to a glucose residue in xyloglucan, forming an alpha-(1-&gt;6)-D-xylosyl-D-glucose linkage.. In terms of biological role, probable xyloglucan xylosyltransferase involved in the biosynthesis of xyloglucan. In Arabidopsis thaliana (Mouse-ear cress), this protein is Probable xyloglucan 6-xylosyltransferase 3.